The following is a 319-amino-acid chain: MPDTATGHPTSHGNVSPFVEIARADWAALAPATHLPLRETELVQLRGIGDRLDMHEVEDVYLPLSRLLNLYVTGTKKLHRDTSAFLGERAKSTPFIIGVAGSVAVGKSTVARLLREMLARWDDTPRVELVTTDGFLHPNAELQRRGLMERKGFPESYDRRALLRFVTQVKSGVPEVRAPFYSHLAYDIVPGAEVVVRQPDVLIIEGLNVLQPAASGAKLAVSDLFDFSIYVDARTHDIAQWYEERFLSLQRGAFSNPRSYFHRYAELSPAEAVARARGIWSAINEPNLEQNIRPTRSRATLVLRKDADHSVANVLLRKL.

101-108 (GSVAVGKS) is an ATP binding site.

This sequence belongs to the prokaryotic pantothenate kinase family.

The protein resides in the cytoplasm. The catalysed reaction is (R)-pantothenate + ATP = (R)-4'-phosphopantothenate + ADP + H(+). The protein operates within cofactor biosynthesis; coenzyme A biosynthesis; CoA from (R)-pantothenate: step 1/5. This is Pantothenate kinase from Clavibacter michiganensis subsp. michiganensis (strain NCPPB 382).